Here is a 645-residue protein sequence, read N- to C-terminus: Beta-galactosidase (645 aa).

Substrate is bound at residue arginine 102. Residue cysteine 106 coordinates Zn(2+). Asparagine 140 contacts substrate. Glutamate 141 (proton donor) is an active-site residue. The Zn(2+) site is built by cysteine 150, cysteine 152, and cysteine 155. Glutamate 312 functions as the Nucleophile in the catalytic mechanism. Substrate-binding positions include tryptophan 320 and 360 to 363; that span reads EQMH.

Belongs to the glycosyl hydrolase 42 family. In terms of assembly, homotrimer.

It catalyses the reaction Hydrolysis of terminal non-reducing beta-D-galactose residues in beta-D-galactosides.. With respect to regulation, inhibited by Cu(2+) and Fe(2+), and moderately activated by divalent cations such as Co(2+), Mn(2+) and Zn(2+). Considerably activated by dithiothreitol, beta-mercaptoethanol and cysteine. The protein is Beta-galactosidase of Thermus thermophilus.